Reading from the N-terminus, the 285-residue chain is Urease accessory protein UreD (285 aa).

It belongs to the UreD family. In terms of assembly, ureD, UreF and UreG form a complex that acts as a GTP-hydrolysis-dependent molecular chaperone, activating the urease apoprotein by helping to assemble the nickel containing metallocenter of UreC. The UreE protein probably delivers the nickel.

The protein localises to the cytoplasm. Required for maturation of urease via the functional incorporation of the urease nickel metallocenter. The protein is Urease accessory protein UreD of Picosynechococcus sp. (strain ATCC 27264 / PCC 7002 / PR-6) (Agmenellum quadruplicatum).